We begin with the raw amino-acid sequence, 535 residues long: Putative cysteine ligase BshC (535 aa).

Positions 420 to 477 form a coiled coil; that stretch reads DTFKALKESINSAYKNLQEKLAPLGADFQKLTGENLGRVMAQVKYLEERAQKYHREKN.

It belongs to the BshC family.

Functionally, involved in bacillithiol (BSH) biosynthesis. May catalyze the last step of the pathway, the addition of cysteine to glucosamine malate (GlcN-Mal) to generate BSH. This chain is Putative cysteine ligase BshC, found in Carboxydothermus hydrogenoformans (strain ATCC BAA-161 / DSM 6008 / Z-2901).